We begin with the raw amino-acid sequence, 101 residues long: Small ribosomal subunit protein bS6 (101 aa).

Belongs to the bacterial ribosomal protein bS6 family.

Binds together with bS18 to 16S ribosomal RNA. This chain is Small ribosomal subunit protein bS6, found in Arthrobacter sp. (strain FB24).